The following is a 769-amino-acid chain: Probable beta-glucosidase M (769 aa).

The first 22 residues, 1 to 22 (MHSNVGLAGLAGLLATASVCLS), serve as a signal peptide directing secretion. Asn28, Asn75, and Asn262 each carry an N-linked (GlcNAc...) asparagine glycan. Asp290 is a catalytic residue. Residues Asn318, Asn325, Asn396, Asn437, Asn510, Asn546, and Asn625 are each glycosylated (N-linked (GlcNAc...) asparagine).

It belongs to the glycosyl hydrolase 3 family.

It localises to the secreted. The enzyme catalyses Hydrolysis of terminal, non-reducing beta-D-glucosyl residues with release of beta-D-glucose.. Its pathway is glycan metabolism; cellulose degradation. In terms of biological role, beta-glucosidases are one of a number of cellulolytic enzymes involved in the degradation of cellulosic biomass. Catalyzes the last step releasing glucose from the inhibitory cellobiose. The sequence is that of Probable beta-glucosidase M (bglM) from Aspergillus fumigatus (strain CBS 144.89 / FGSC A1163 / CEA10) (Neosartorya fumigata).